The chain runs to 799 residues: Putative aconitate hydratase, mitochondrial (799 aa).

A mitochondrion-targeting transit peptide spans 1–32 (MVRQLVWQRATASRRLAPKCLSPQQLFARRGL). Residues glutamine 108 and 201–203 (DSH) contribute to the substrate site. [4Fe-4S] cluster is bound by residues cysteine 399, cysteine 462, and cysteine 465. Substrate contacts are provided by arginine 489 and arginine 494. Residues 538 to 564 (KFRPPQGSDLPSAGFADGNPALQPSAG) form a disordered region. 685 to 686 (AR) contributes to the substrate binding site.

Belongs to the aconitase/IPM isomerase family.

It is found in the mitochondrion. Has no detectable activity towards cis-acontiate or cis-homoaconitate. The chain is Putative aconitate hydratase, mitochondrial (acoB) from Aspergillus fumigatus (strain ATCC MYA-4609 / CBS 101355 / FGSC A1100 / Af293) (Neosartorya fumigata).